Here is a 1128-residue protein sequence, read N- to C-terminus: Exportin-6 (1128 aa).

An Importin N-terminal domain is found at 31-97; that stretch reads IEELLNSFAG…RSCLPKLLLS (67 aa).

The protein belongs to the exportin family.

The protein localises to the nucleus. Its subcellular location is the cytoplasm. Functionally, mediates the nuclear export of actin and profilin-actin complexes in somatic cells. This is Exportin-6 (xpo6) from Danio rerio (Zebrafish).